The following is a 174-amino-acid chain: Shikimate kinase (174 aa).

Residue 14–19 coordinates ATP; the sequence is GAGKST. Serine 18 contacts Mg(2+). Substrate-binding residues include aspartate 36, arginine 60, and glycine 82. Arginine 120 contributes to the ATP binding site. Arginine 139 is a binding site for substrate. Glutamine 156 serves as a coordination point for ATP.

The protein belongs to the shikimate kinase family. As to quaternary structure, monomer. It depends on Mg(2+) as a cofactor.

It is found in the cytoplasm. It catalyses the reaction shikimate + ATP = 3-phosphoshikimate + ADP + H(+). The protein operates within metabolic intermediate biosynthesis; chorismate biosynthesis; chorismate from D-erythrose 4-phosphate and phosphoenolpyruvate: step 5/7. Catalyzes the specific phosphorylation of the 3-hydroxyl group of shikimic acid using ATP as a cosubstrate. This Vibrio cholerae serotype O1 (strain ATCC 39541 / Classical Ogawa 395 / O395) protein is Shikimate kinase.